Reading from the N-terminus, the 70-residue chain is Bowman-Birk type proteinase inhibitor A7 (70 aa).

4 disulfides stabilise this stretch: Cys-12–Cys-31, Cys-18–Cys-29, Cys-38–Cys-45, and Cys-42–Cys-59.

Belongs to the Bowman-Birk serine protease inhibitor family. As to expression, expressed in bulb (at protein level).

Serine protease inhibitor. Strongly inhibits trypsin (Ki = 7.1 nM) and almost completely inhibits elastase. Also inhibits chymotrypsin (Ki = 19 nM). Does not inhibit bacterial subtilisin. The chain is Bowman-Birk type proteinase inhibitor A7 from Hyacinthus orientalis (Common hyacinth).